We begin with the raw amino-acid sequence, 301 residues long: Homoserine O-acetyltransferase (301 aa).

Catalysis depends on cysteine 142, which acts as the Acyl-thioester intermediate. 2 residues coordinate substrate: lysine 163 and serine 192. The active-site Proton acceptor is histidine 235. The active site involves glutamate 237. Residue arginine 249 participates in substrate binding.

The protein belongs to the MetA family.

The protein resides in the cytoplasm. The catalysed reaction is L-homoserine + acetyl-CoA = O-acetyl-L-homoserine + CoA. It functions in the pathway amino-acid biosynthesis; L-methionine biosynthesis via de novo pathway; O-acetyl-L-homoserine from L-homoserine: step 1/1. Functionally, transfers an acetyl group from acetyl-CoA to L-homoserine, forming acetyl-L-homoserine. The sequence is that of Homoserine O-acetyltransferase from Novosphingobium aromaticivorans (strain ATCC 700278 / DSM 12444 / CCUG 56034 / CIP 105152 / NBRC 16084 / F199).